Reading from the N-terminus, the 934-residue chain is Desmocollin 2-like protein (934 aa).

Cadherin domains lie at 167-274, 274-381, 382-494, and 495-600; these read RWRP…APEF, FTGN…PPTF, KEKL…GPEF, and NPNI…IPVI. The Extracellular segment spans residues 167-716; the sequence is RWRPLPFSVV…SASVSLGNYG (550 aa). Residues Asn197, Asn296, and Asn316 are each glycosylated (N-linked (GlcNAc...) asparagine). N-linked (GlcNAc...) asparagine glycans are attached at residues Asn509, Asn565, and Asn569. Residues 717-737 traverse the membrane as a helical segment; it reads ILALVLSGLLLLLLCLFLIFF. At 738-934 the chain is on the cytoplasmic side; it reads CTTKRDKLQI…ICYTTNKTGK (197 aa).

As to expression, expressed at low levels in the brain and heart.

The protein resides in the cell junction. It is found in the desmosome. Its subcellular location is the cell membrane. Functionally, a component of desmosome cell-cell junctions which are required for positive regulation of cellular adhesion. Involved in the interaction of plaque proteins and intermediate filaments mediating cell-cell adhesion. Involved in the formation and structural organization of desmosome cell-cell junctions during embryonic development. Required for embryogenesis, specifically for progression of epiboly and normal convergence-extension movements during gastrulation. Required for the development of desmosomal-rich midlines in the heart. Plays an important role in ventricular contraction and resulting heart stroke volume. The chain is Desmocollin 2-like protein from Danio rerio (Zebrafish).